Here is a 574-residue protein sequence, read N- to C-terminus: Pyruvate kinase PKLR (574 aa).

Phosphoserine is present on residues Ser-2, Ser-19, Ser-26, and Ser-43. Residue Arg-116 participates in substrate binding. Residues Asn-118, Ser-120, Asp-156, and Thr-157 each contribute to the K(+) site. 118–121 (NFSH) is a binding site for ATP. The ATP site is built by Arg-163 and Lys-250. The residue at position 292 (Ser-292) is a Phosphoserine. Lys-313 serves as a coordination point for substrate. Glu-315 is a binding site for Mn(2+). Residues Gly-338, Asp-339, and Thr-371 each contribute to the substrate site. Residue Asp-339 participates in Mn(2+) binding. Beta-D-fructose 1,6-bisphosphate contacts are provided by residues 475–480 (TKTGRS), Trp-525, Arg-532, and 559–564 (RPGSGY).

Belongs to the pyruvate kinase family. As to quaternary structure, homotetramer. It depends on Mg(2+) as a cofactor. The cofactor is Mn(2+). K(+) is required as a cofactor.

The enzyme catalyses pyruvate + ATP = phosphoenolpyruvate + ADP + H(+). It participates in carbohydrate degradation; glycolysis; pyruvate from D-glyceraldehyde 3-phosphate: step 5/5. Its activity is regulated as follows. Allosterically activated by fructose 1,6-bisphosphate. Functionally, pyruvate kinase that catalyzes the conversion of phosphoenolpyruvate to pyruvate with the synthesis of ATP, and which plays a key role in glycolysis. In Rattus norvegicus (Rat), this protein is Pyruvate kinase PKLR (Pklr).